Consider the following 223-residue polypeptide: Protein FAM3D (223 aa).

Residues 1-25 form the signal peptide; it reads MRVAGLIRVVVFIFTIVTMWVFLRS. 2 disulfides stabilise this stretch: C54–C82 and C60–C217. Residues 62 to 221 enclose the GG-type lectin domain; that stretch reads NNFFAFKISS…LELEGCVPRK (160 aa). N-linked (GlcNAc...) asparagine glycosylation is present at N106.

This sequence belongs to the FAM3 family.

Its subcellular location is the secreted. This is Protein FAM3D from Mus musculus (Mouse).